A 201-amino-acid chain; its full sequence is Small ribosomal subunit protein uS4c (201 aa).

The segment at 20-43 (GLTSKRPRAGSDLRNQSRSGKRSQ) is disordered. Residues 89–149 (MRLDNILFRL…DEQKSRALIQ (61 aa)) enclose the S4 RNA-binding domain.

Belongs to the universal ribosomal protein uS4 family. Part of the 30S ribosomal subunit. Contacts protein S5. The interaction surface between S4 and S5 is involved in control of translational fidelity.

The protein localises to the plastid. The protein resides in the chloroplast. In terms of biological role, one of the primary rRNA binding proteins, it binds directly to 16S rRNA where it nucleates assembly of the body of the 30S subunit. Functionally, with S5 and S12 plays an important role in translational accuracy. The protein is Small ribosomal subunit protein uS4c (rps4) of Buxus microphylla (Littleleaf boxwood).